A 79-amino-acid polypeptide reads, in one-letter code: Acyl carrier protein (79 aa).

One can recognise a Carrier domain in the interval 2 to 77; the sequence is SDIEERVKKI…SAIDYVNAHK (76 aa). An O-(pantetheine 4'-phosphoryl)serine modification is found at Ser-37.

The protein belongs to the acyl carrier protein (ACP) family. Post-translationally, 4'-phosphopantetheine is transferred from CoA to a specific serine of apo-ACP by AcpS. This modification is essential for activity because fatty acids are bound in thioester linkage to the sulfhydryl of the prosthetic group.

The protein localises to the cytoplasm. It functions in the pathway lipid metabolism; fatty acid biosynthesis. Its function is as follows. Carrier of the growing fatty acid chain in fatty acid biosynthesis. The polypeptide is Acyl carrier protein (Pseudoalteromonas atlantica (strain T6c / ATCC BAA-1087)).